A 194-amino-acid polypeptide reads, in one-letter code: MIASLSGLLEAVRPGSVVVNMHGIGFLVRVPQSFNPEVDAEVKLYTSLQVREDSVSLYGFASVLECTVFEQLITISGVGPRVALAILSVLTPAEVAAAVLEGDDKPLQRVSGVGKKLAGTIVLQLAGKLTSVPLENRKQEQAVDRSAEIVQALIGLGWQRQESAAAVESVLEKDQSLTMPEILRNALRYLAKQE.

The interval 1–61 is domain I; that stretch reads MIASLSGLLE…EDSVSLYGFA (61 aa). The tract at residues 62–136 is domain II; sequence SVLECTVFEQ…GKLTSVPLEN (75 aa). The tract at residues 136–140 is flexible linker; sequence NRKQE. The segment at 141 to 194 is domain III; it reads QAVDRSAEIVQALIGLGWQRQESAAAVESVLEKDQSLTMPEILRNALRYLAKQE.

This sequence belongs to the RuvA family. As to quaternary structure, homotetramer. Forms an RuvA(8)-RuvB(12)-Holliday junction (HJ) complex. HJ DNA is sandwiched between 2 RuvA tetramers; dsDNA enters through RuvA and exits via RuvB. An RuvB hexamer assembles on each DNA strand where it exits the tetramer. Each RuvB hexamer is contacted by two RuvA subunits (via domain III) on 2 adjacent RuvB subunits; this complex drives branch migration. In the full resolvosome a probable DNA-RuvA(4)-RuvB(12)-RuvC(2) complex forms which resolves the HJ.

It is found in the cytoplasm. Its function is as follows. The RuvA-RuvB-RuvC complex processes Holliday junction (HJ) DNA during genetic recombination and DNA repair, while the RuvA-RuvB complex plays an important role in the rescue of blocked DNA replication forks via replication fork reversal (RFR). RuvA specifically binds to HJ cruciform DNA, conferring on it an open structure. The RuvB hexamer acts as an ATP-dependent pump, pulling dsDNA into and through the RuvAB complex. HJ branch migration allows RuvC to scan DNA until it finds its consensus sequence, where it cleaves and resolves the cruciform DNA. The protein is Holliday junction branch migration complex subunit RuvA of Tropheryma whipplei (strain Twist) (Whipple's bacillus).